The primary structure comprises 396 residues: Putative cyclin-B3-1 (396 aa).

A disordered region spans residues 1 to 98; that stretch reads MLRDGNKQSK…KVLDVTAKPK (98 aa). A compositionally biased stretch (polar residues) spans 21–32; the sequence is KTTVKTSLQNRS. Residues 39–57 are compositionally biased toward low complexity; it reads VGRSKSRSISSIPSSAVAS. The span at 76-85 shows a compositional bias: polar residues; it reads GESSSSGNKD.

The protein belongs to the cyclin family. Cyclin AB subfamily.

In Arabidopsis thaliana (Mouse-ear cress), this protein is Putative cyclin-B3-1 (CYCB3-1).